Reading from the N-terminus, the 75-residue chain is Probable protein BRICK1-B (75 aa).

Positions 41–72 (MSCRSRLATLNEKLTTLERRIEYIEARVTKGE) form a coiled coil.

The protein belongs to the BRK1 family.

It localises to the cytoplasm. The protein resides in the cytoskeleton. In terms of biological role, involved in regulation of actin and microtubule organization. Part of a WAVE complex that activates the Arp2/3 complex. The chain is Probable protein BRICK1-B (brk1-b) from Xenopus laevis (African clawed frog).